The primary structure comprises 999 residues: Translation initiation factor IF-2 (999 aa).

Residues 50–407 are disordered; it reads AFVNNTGSPA…RGQGQTVRLS (358 aa). 2 stretches are compositionally biased toward pro residues: residues 60–89 and 96–121; these read PAAPPAATPPTPTPTPTPPRTPTPAPPPGG and PMPPRRPGAPTPGPKPKGPVPGPPQS. Residues 136 to 162 are compositionally biased toward low complexity; it reads VAAAEARAAALKAEQEAAVKAAQAARQ. Residues 163-173 are compositionally biased toward basic and acidic residues; that stretch reads QQRDNVRREPP. Residues 179 to 194 show a composition bias toward pro residues; the sequence is RPGPRPGPGAMPPRPG. A compositionally biased stretch (low complexity) spans 213–222; the sequence is GGRPPARGAG. The span at 244-266 shows a compositional bias: pro residues; the sequence is RPSPASMPPRPSPASMPPRPSPA. Over residues 275–367 the composition is skewed to gly residues; sequence RPGGPGSGRP…GAAGAFGRPG (93 aa). The segment covering 371 to 380 has biased composition (basic residues); sequence TRGRKSKKQR. Polar residues predominate over residues 388-405; that stretch reads SAPTMSSGAPRGQGQTVR. The 173-residue stretch at 490-662 folds into the tr-type G domain; that stretch reads SRPPVVTVMG…VLLTADASLE (173 aa). A G1 region spans residues 499-506; that stretch reads GHVDHGKT. Position 499–506 (499–506) interacts with GTP; the sequence is GHVDHGKT. Residues 524-528 form a G2 region; that stretch reads GITQH. The G3 stretch occupies residues 549 to 552; it reads DTPG. GTP is bound by residues 549–553 and 603–606; these read DTPGH and NKID. Residues 603–606 are G4; the sequence is NKID. The tract at residues 639 to 641 is G5; sequence AAK.

This sequence belongs to the TRAFAC class translation factor GTPase superfamily. Classic translation factor GTPase family. IF-2 subfamily.

The protein localises to the cytoplasm. Its function is as follows. One of the essential components for the initiation of protein synthesis. Protects formylmethionyl-tRNA from spontaneous hydrolysis and promotes its binding to the 30S ribosomal subunits. Also involved in the hydrolysis of GTP during the formation of the 70S ribosomal complex. This is Translation initiation factor IF-2 from Salinispora tropica (strain ATCC BAA-916 / DSM 44818 / JCM 13857 / NBRC 105044 / CNB-440).